Consider the following 308-residue polypeptide: MDASGASSFLRGRCLESCFKASFGMSQPKDAAGQPSRRPADADDFVDDDRWITVILSVVRIAACFLSMMVTTIVWNMIMLILLPWPYARIRQGNLYGHVTGRMLMWILGNPITIEGSEFSNTRAIYICNHASLVDIFLIMWLIPKGTVTIAKKEIIWYPLFGQLYVLANHQRIDRSNPSAAIESIKEVARAVVKKNLSLIIFPEGTRSKTGRLLPFKKGFIHIALQTRLPIVPMVLTGTHLAWRKNSLRVRPAPITVKYFSPIKTDDWEEEKINHYVEMIHALYVDHLPESQKPLVSKGRDASGRSNS.

3 helical membrane passes run 65–85 (FLSM…LLPW), 124–144 (AIYI…WLIP), and 148–168 (VTIA…YVLA). Positions 130–135 (HASLVD) match the HXXXXD motif motif.

Belongs to the 1-acyl-sn-glycerol-3-phosphate acyltransferase family.

It localises to the membrane. The enzyme catalyses a 1-acyl-sn-glycero-3-phosphate + an acyl-CoA = a 1,2-diacyl-sn-glycero-3-phosphate + CoA. In terms of biological role, converts lysophosphatidic acid (LPA) into phosphatidic acid by incorporating acyl moiety at the 2 position. This enzyme shows a preference for medium-chain-length fatty acyl-coenzyme a substrates. The polypeptide is 1-acyl-sn-glycerol-3-phosphate acyltransferase (Cocos nucifera (Coconut palm)).